We begin with the raw amino-acid sequence, 179 residues long: Probable DNA-directed RNA polymerase subunit delta (179 aa).

One can recognise an HTH HARE-type domain in the interval Met-14–Trp-81. The segment at Val-108 to Lys-179 is disordered. A compositionally biased stretch (acidic residues) spans Val-109–Lys-179.

This sequence belongs to the RpoE family. As to quaternary structure, RNAP is composed of a core of 2 alpha, a beta and a beta' subunits. The core is associated with a delta subunit and one of several sigma factors.

In terms of biological role, participates in both the initiation and recycling phases of transcription. In the presence of the delta subunit, RNAP displays an increased specificity of transcription, a decreased affinity for nucleic acids, and an increased efficiency of RNA synthesis because of enhanced recycling. The chain is Probable DNA-directed RNA polymerase subunit delta from Bacillus pumilus (strain SAFR-032).